We begin with the raw amino-acid sequence, 136 residues long: TBK1 inhibitor DP96R (136 aa).

The segment at 66-86 (NNALEKPAGANNIPEKSAGRM) is disordered.

Belongs to the asfivirus DP96R family.

Inhibits cGAS-STING-mediated type I IFN expression and NF-kB activation by inhibiting TBK1 and IKBKB/IKKB. Inhibits host TBK1 phosphorylation. This Ornithodoros (relapsing fever ticks) protein is TBK1 inhibitor DP96R.